Here is a 382-residue protein sequence, read N- to C-terminus: Layilin (382 aa).

Residues 1–21 (MRPGTALQAVLLAVLLVGLRA) form the signal peptide. At 22–235 (ATGRLLSASD…SREAALNLAY (214 aa)) the chain is on the extracellular side. The C-type lectin domain maps to 45–185 (TQRPCYKVIY…CNMKNNFICK (141 aa)). Cystine bridges form between cysteine 71–cysteine 184 and cysteine 150–cysteine 176. N-linked (GlcNAc...) asparagine glycosylation occurs at asparagine 117. A helical membrane pass occupies residues 236–256 (ILIPSIPLLLLLVVTTVVCWV). The Cytoplasmic portion of the chain corresponds to 257–382 (WICRKRKREQ…GWVENEIYGY (126 aa)). Residues 266–285 (QPDPSTKKQHTIWPSPHQGN) form a disordered region. Phosphoserine is present on residues serine 286 and serine 299. The tract at residues 330 to 374 (DYDNMAVNPSESGFVTLVSVESGFVTNDIYEFSPDQMGRSKESGW) is interaction with NF2. The segment at 337–382 (NPSESGFVTLVSVESGFVTNDIYEFSPDQMGRSKESGWVENEIYGY) is interaction with TLN1. 5 consecutive repeat copies span residues 340-344 (ESGFV), 350-354 (ESGFV), 356-359 (NDIY), 371-375 (ESGWV), and 377-380 (NEIY). The segment at 340-375 (ESGFVTLVSVESGFVTNDIYEFSPDQMGRSKESGWV) is 3 X 5 AA repeats of E-S-G-X-V. The interval 356 to 380 (NDIYEFSPDQMGRSKESGWVENEIY) is 2 X 4 AA repeats of N-X-I-Y.

Interacts with NF2, RDX and TLN1.

The protein localises to the membrane. In terms of biological role, receptor for hyaluronate. This chain is Layilin (LAYN), found in Homo sapiens (Human).